Here is a 340-residue protein sequence, read N- to C-terminus: Anthranilate phosphoribosyltransferase (340 aa).

5-phospho-alpha-D-ribose 1-diphosphate is bound by residues G78, 81–82 (GD), T86, 88–91 (NIST), 106–114 (KHGNRSVSS), and S118. An anthranilate-binding site is contributed by G78. S90 lines the Mg(2+) pocket. N109 is a binding site for anthranilate. Residue R164 participates in anthranilate binding. Mg(2+) is bound by residues D223 and E224.

This sequence belongs to the anthranilate phosphoribosyltransferase family. Homodimer. Mg(2+) serves as cofactor.

It catalyses the reaction N-(5-phospho-beta-D-ribosyl)anthranilate + diphosphate = 5-phospho-alpha-D-ribose 1-diphosphate + anthranilate. It participates in amino-acid biosynthesis; L-tryptophan biosynthesis; L-tryptophan from chorismate: step 2/5. Catalyzes the transfer of the phosphoribosyl group of 5-phosphorylribose-1-pyrophosphate (PRPP) to anthranilate to yield N-(5'-phosphoribosyl)-anthranilate (PRA). This is Anthranilate phosphoribosyltransferase from Bacillus pumilus (Bacillus mesentericus).